The following is a 435-amino-acid chain: 5-methylthioadenosine/S-adenosylhomocysteine deaminase (435 aa).

Zn(2+) is bound by residues His-65 and His-67. The substrate site is built by Glu-94, Arg-150, and His-189. His-216 contacts Zn(2+). Glu-219 and Asp-304 together coordinate substrate. Asp-304 lines the Zn(2+) pocket.

This sequence belongs to the metallo-dependent hydrolases superfamily. MTA/SAH deaminase family. The cofactor is Zn(2+).

It carries out the reaction S-adenosyl-L-homocysteine + H2O + H(+) = S-inosyl-L-homocysteine + NH4(+). The enzyme catalyses S-methyl-5'-thioadenosine + H2O + H(+) = S-methyl-5'-thioinosine + NH4(+). In terms of biological role, catalyzes the deamination of 5-methylthioadenosine and S-adenosyl-L-homocysteine into 5-methylthioinosine and S-inosyl-L-homocysteine, respectively. Is also able to deaminate adenosine. This is 5-methylthioadenosine/S-adenosylhomocysteine deaminase from Bacillus cereus (strain G9842).